A 199-amino-acid chain; its full sequence is Dephospho-CoA kinase (199 aa).

Residues 3–199 (VLGLTGSIGM…AAARMPRRRP (197 aa)) form the DPCK domain. 11-16 (GMGKST) provides a ligand contact to ATP.

This sequence belongs to the CoaE family.

Its subcellular location is the cytoplasm. The enzyme catalyses 3'-dephospho-CoA + ATP = ADP + CoA + H(+). It participates in cofactor biosynthesis; coenzyme A biosynthesis; CoA from (R)-pantothenate: step 5/5. Functionally, catalyzes the phosphorylation of the 3'-hydroxyl group of dephosphocoenzyme A to form coenzyme A. This is Dephospho-CoA kinase from Rhodopseudomonas palustris (strain HaA2).